The following is a 463-amino-acid chain: Fumarate hydratase class II (463 aa).

Residues 95–97 (SGT), 126–129 (HPND), 136–138 (SSN), and threonine 184 contribute to the substrate site. Catalysis depends on histidine 185, which acts as the Proton donor/acceptor. The active site involves serine 315. Substrate is bound by residues serine 316 and 321–323 (KIN).

Belongs to the class-II fumarase/aspartase family. Fumarase subfamily. In terms of assembly, homotetramer.

It localises to the cytoplasm. The enzyme catalyses (S)-malate = fumarate + H2O. The protein operates within carbohydrate metabolism; tricarboxylic acid cycle; (S)-malate from fumarate: step 1/1. Its function is as follows. Involved in the TCA cycle. Catalyzes the stereospecific interconversion of fumarate to L-malate. The protein is Fumarate hydratase class II of Chlamydia muridarum (strain MoPn / Nigg).